Reading from the N-terminus, the 322-residue chain is Delta-aminolevulinic acid dehydratase (322 aa).

Residues cysteine 120, cysteine 122, and cysteine 130 each coordinate Zn(2+). Residue lysine 195 is the Schiff-base intermediate with substrate of the active site. Positions 205 and 217 each coordinate 5-aminolevulinate. Glutamate 233 is a Mg(2+) binding site. The active-site Schiff-base intermediate with substrate is the lysine 248. 5-aminolevulinate contacts are provided by serine 274 and tyrosine 312.

This sequence belongs to the ALAD family. In terms of assembly, homooctamer. It depends on Zn(2+) as a cofactor.

The catalysed reaction is 2 5-aminolevulinate = porphobilinogen + 2 H2O + H(+). Its pathway is porphyrin-containing compound metabolism; protoporphyrin-IX biosynthesis; coproporphyrinogen-III from 5-aminolevulinate: step 1/4. Catalyzes an early step in the biosynthesis of tetrapyrroles. Binds two molecules of 5-aminolevulinate per subunit, each at a distinct site, and catalyzes their condensation to form porphobilinogen. The protein is Delta-aminolevulinic acid dehydratase (hemB) of Archaeoglobus fulgidus (strain ATCC 49558 / DSM 4304 / JCM 9628 / NBRC 100126 / VC-16).